The following is a 169-amino-acid chain: Phosphopantetheine adenylyltransferase (169 aa).

Residue Ser-10 coordinates substrate. Residues 10-11 (SF) and His-18 contribute to the ATP site. Substrate-binding residues include Lys-42, Leu-74, and Arg-88. Residues 89–91 (GLR), Glu-99, and 124–130 (YAFLSSS) each bind ATP.

This sequence belongs to the bacterial CoaD family. Homohexamer. The cofactor is Mg(2+).

The protein resides in the cytoplasm. It catalyses the reaction (R)-4'-phosphopantetheine + ATP + H(+) = 3'-dephospho-CoA + diphosphate. Its pathway is cofactor biosynthesis; coenzyme A biosynthesis; CoA from (R)-pantothenate: step 4/5. Reversibly transfers an adenylyl group from ATP to 4'-phosphopantetheine, yielding dephospho-CoA (dPCoA) and pyrophosphate. In Geobacillus sp. (strain WCH70), this protein is Phosphopantetheine adenylyltransferase.